We begin with the raw amino-acid sequence, 73 residues long: Large ribosomal subunit protein bL31 (73 aa).

It belongs to the bacterial ribosomal protein bL31 family. Type A subfamily. Part of the 50S ribosomal subunit.

Its function is as follows. Binds the 23S rRNA. This is Large ribosomal subunit protein bL31 from Bartonella henselae (strain ATCC 49882 / DSM 28221 / CCUG 30454 / Houston 1) (Rochalimaea henselae).